A 299-amino-acid chain; its full sequence is CCR4-NOT transcription complex subunit 9 (299 aa).

N-acetylmethionine is present on methionine 1.

Belongs to the CNOT9 family. As to quaternary structure, homodimer. Component of the CCR4-NOT complex; distinct complexes seem to exist that differ in the participation of probably mutually exclusive catalytic subunits. Interacts with MYB, ATF2, RARA, RARB, RARG, RXRA, RXRB and RXRG. Identified in a complex with ATF2 bound to target DNA. Interacts with NANOS2. Directly interacts with ZNF335.

It localises to the nucleus. It is found in the cytoplasm. Its subcellular location is the P-body. Its function is as follows. Component of the CCR4-NOT complex which is one of the major cellular mRNA deadenylases and is linked to various cellular processes including bulk mRNA degradation, miRNA-mediated repression, translational repression during translational initiation and general transcription regulation. Additional complex functions may be a consequence of its influence on mRNA expression. Involved in down-regulation of MYB- and JUN-dependent transcription. Enhances ligand-dependent transcriptional activity of nuclear hormone receptors. May play a role in cell differentiation. The protein is CCR4-NOT transcription complex subunit 9 of Bos taurus (Bovine).